Consider the following 285-residue polypeptide: N(G),N(G)-dimethylarginine dimethylaminohydrolase 1 (285 aa).

N-acetylalanine is present on Ala-2. Residue Leu-30 coordinates substrate. Ser-33 is modified (phosphoserine). The substrate site is built by Asp-73, Glu-78, Asp-79, Arg-98, and Arg-145. Residue His-173 is the Proton donor of the active site. Cys-222 bears the S-nitrosocysteine mark. Residue Val-268 participates in substrate binding. Cys-274 carries the S-nitrosocysteine modification. Cys-274 serves as the catalytic Nucleophile. Cys-274 is a binding site for Zn(2+).

This sequence belongs to the DDAH family. Monomer. As to expression, detected in skeletal muscle, lung, heart, liver, kidney and brain (at protein level).

The catalysed reaction is N(omega),N(omega)-dimethyl-L-arginine + H2O = dimethylamine + L-citrulline. It carries out the reaction N(omega)-methyl-L-arginine + H2O = L-citrulline + methylamine. Its activity is regulated as follows. Inhibited by zinc ions. Its function is as follows. Hydrolyzes N(G),N(G)-dimethyl-L-arginine (ADMA) and N(G)-monomethyl-L-arginine (MMA) which act as inhibitors of NOS. Has therefore a role in the regulation of nitric oxide generation. This is N(G),N(G)-dimethylarginine dimethylaminohydrolase 1 (Ddah1) from Mus musculus (Mouse).